Here is a 327-residue protein sequence, read N- to C-terminus: N-acetylmuramoyl-L-alanine amidase sle1 (327 aa).

Positions 1–25 (MRKKIIATVIGTSALAAVTWTNADA) are cleaved as a signal peptide. LysM domains are found at residues 27–70 (TTYK…SLKV), 86–129 (STYT…KLKV), and 150–193 (TTYT…KLKV). The interval 68 to 89 (LKVSGSTSSSTSSNTSTGSTYT) is disordered. Low complexity predominate over residues 71–87 (SGSTSSSTSSNTSTGST). A Peptidase C51 domain is found at 203–327 (GSSSTGSAGY…SQVSSYVYIH (125 aa)).

The protein resides in the secreted. The protein localises to the cell surface. It catalyses the reaction Hydrolyzes the link between N-acetylmuramoyl residues and L-amino acid residues in certain cell-wall glycopeptides.. Functionally, peptidoglycan hydrolase involved in the splitting of the septum during cell division. This chain is N-acetylmuramoyl-L-alanine amidase sle1 (sle1), found in Staphylococcus saprophyticus subsp. saprophyticus (strain ATCC 15305 / DSM 20229 / NCIMB 8711 / NCTC 7292 / S-41).